The primary structure comprises 608 residues: 2',5'-phosphodiesterase 12 (608 aa).

The transit peptide at 1-16 (MWRLPGRSALRGVRSV) directs the protein to the mitochondrion. Residues 90–99 (AAKKSRKNRA) show a composition bias toward basic residues. Positions 90–111 (AAKKSRKNRAHSSGGAACEATG) are disordered. S216 carries the post-translational modification Phosphoserine. Mg(2+) is bound by residues E350, D495, and N497. The active-site Proton donor/acceptor is D495.

It belongs to the CCR4/nocturin family. Requires Mg(2+) as cofactor.

The protein resides in the mitochondrion matrix. The catalysed reaction is Exonucleolytic cleavage of poly(A) to 5'-AMP.. In terms of biological role, enzyme that cleaves 2',5'-phosphodiester bond linking adenosines of the 5'-triphosphorylated oligoadenylates, triphosphorylated oligoadenylates referred as 2-5A modulates the 2-5A system. Degrades triphosphorylated 2-5A to produce AMP and ATP. Also cleaves 3',5'-phosphodiester bond of oligoadenylates. Plays a role as a negative regulator of the 2-5A system that is one of the major pathways for antiviral and antitumor functions induced by interferons (IFNs). Suppression of this enzyme increases cellular 2-5A levels and decreases viral replication in cultured small-airway epithelial cells. The protein is 2',5'-phosphodiesterase 12 (Pde12) of Mus musculus (Mouse).